Reading from the N-terminus, the 434-residue chain is UPF0597 protein CLB_1949 (434 aa).

This sequence belongs to the UPF0597 family.

This Clostridium botulinum (strain ATCC 19397 / Type A) protein is UPF0597 protein CLB_1949.